The following is an 89-amino-acid chain: Small ribosomal subunit protein uS14 (89 aa).

The protein belongs to the universal ribosomal protein uS14 family. As to quaternary structure, part of the 30S ribosomal subunit. Contacts proteins S3 and S10.

In terms of biological role, binds 16S rRNA, required for the assembly of 30S particles and may also be responsible for determining the conformation of the 16S rRNA at the A site. The protein is Small ribosomal subunit protein uS14 of Deinococcus radiodurans (strain ATCC 13939 / DSM 20539 / JCM 16871 / CCUG 27074 / LMG 4051 / NBRC 15346 / NCIMB 9279 / VKM B-1422 / R1).